We begin with the raw amino-acid sequence, 1010 residues long: Importin-8 (1010 aa).

The Importin N-terminal domain maps to 22-102 (AETELNQSYK…RDNIVEGIIR (81 aa)). The segment covering 886–895 (NHSKAEKVDI) has biased composition (basic and acidic residues). The segment at 886-932 (NHSKAEKVDIEENEEISSEEEEETSVSAQAMQSQIGRSEEEDDDDWD) is disordered. Residues 896-909 (EENEEISSEEEEET) show a composition bias toward acidic residues. 2 positions are modified to phosphoserine: Ser-902 and Ser-903. Residues 910–921 (SVSAQAMQSQIG) show a composition bias toward polar residues.

It belongs to the importin beta family. In terms of assembly, forms a heterodimer with KPNB1. Interacts with SRP19. Interacts with RPL23A. Binds directly to nuclear pore complexes. Interacts with LRPPRC; the interaction occurs when LRPPRC is in its RNA-free form and promotes import of LRPPRC to the nucleus to allow for EIF4E-mediated export of mRNAS from the nucleus to the cytoplasm.

Its subcellular location is the cytoplasm. It localises to the nucleus. In terms of biological role, involved in nuclear protein import, either by acting as autonomous nuclear transport receptor or as an adapter-like protein in association with the importin-beta subunit KPNB1. Acting autonomously, may serve as receptor for nuclear localization signals (NLS) and promote translocation of import substrates through the nuclear pore complex (NPC) by an energy requiring, Ran-dependent mechanism. At the nucleoplasmic side of the NPC, Ran binds to importin, the importin/substrate complex dissociates and importin is re-exported from the nucleus to the cytoplasm where GTP hydrolysis releases Ran. The directionality of nuclear import is thought to be conferred by an asymmetric distribution of the GTP- and GDP-bound forms of Ran between the cytoplasm and nucleus. In vitro mediates the nuclear import of the signal recognition particle protein SRP19. May also be involved in cytoplasm-to-nucleus shuttling of a broad spectrum of other cargos, including Argonaute-microRNAs complexes, the JUN protein, RELA/NF-kappa-B p65 subunit, the translation initiation factor EIF4E and a set of receptor-activated mothers against decapentaplegic homolog (SMAD) transcription factors that play a critical role downstream of the large family of transforming growth factor beta and bone morphogenetic protein (BMP) cytokines. This is Importin-8 from Mus musculus (Mouse).